The chain runs to 743 residues: TSL-kinase interacting protein 1 (743 aa).

The SANT domain occupies 53-104 (RQWAAWTHQEEESFFTALRQVGKNFEKITSRVQSKNKDQVRHYYYRLVRRMN). Disordered regions lie at residues 486–523 (SGVH…PGEW) and 626–679 (SPKG…TPCG). Residues 488–499 (VHDRPARSRDDY) show a composition bias toward basic and acidic residues.

In terms of assembly, interacts only with active kinase forms of TOUSLED. Interacts with SNL1. In terms of processing, phosphorylated in vitro by TOUSLED. In terms of tissue distribution, expressed in flowers, roots and leaves.

Its subcellular location is the nucleus. This Arabidopsis thaliana (Mouse-ear cress) protein is TSL-kinase interacting protein 1 (TKI1).